We begin with the raw amino-acid sequence, 400 residues long: MDSRLLSGIGAGPDSGSYTDLNRLNQLKVGKDRDGEANIRKVAQEFESLFLNEMLKSMRSANEALGDGNFMNSQTTKQYQDMYDQQLSVSLSKNAGGIGLADVLVRQLSKMKQGSRGNGENPFARVAENGAGRWPSNPSAQAGKALPMPEAGRDDSKLLNQRRLALPGKLAERMLAGIVPSASPAASQMQSLGQDSYLPAQSYPAASRRGFSTDGVDSQGSRRIAQPPLARGKSMFASADEFIATMLPMAQKAAERIGVDARYLVAQAALETGWGKSIIRQQDGGSSHNLFGIKTGSRWDGASARALTTEYEGGKAVKEIAAFRSYSSFEQSFHDYVSFLQGNDRYQNALDSAANPERFMQELQRAGYATDPQYARKVAQIARQMQTYQAVAAAGTPPLG.

Disordered stretches follow at residues 112-155 (KQGS…GRDD) and 204-229 (PAAS…QPPL). The tract at residues 238-400 (SADEFIATML…VAAAGTPPLG (163 aa)) is catalytic. Catalysis depends on residues E310 and D335.

In the N-terminal section; belongs to the FlgJ family. The protein in the C-terminal section; belongs to the glycosyl hydrolase 73 family.

Its subcellular location is the periplasm. Functionally, flagellum-specific muramidase which hydrolyzes the peptidoglycan layer to assemble the rod structure in the periplasmic space. The chain is Peptidoglycan hydrolase FlgJ (flgJ) from Pseudomonas aeruginosa (strain ATCC 15692 / DSM 22644 / CIP 104116 / JCM 14847 / LMG 12228 / 1C / PRS 101 / PAO1).